A 475-amino-acid chain; its full sequence is Aspartyl/glutamyl-tRNA(Asn/Gln) amidotransferase subunit B (475 aa).

Belongs to the GatB/GatE family. GatB subfamily. As to quaternary structure, heterotrimer of A, B and C subunits.

The enzyme catalyses L-glutamyl-tRNA(Gln) + L-glutamine + ATP + H2O = L-glutaminyl-tRNA(Gln) + L-glutamate + ADP + phosphate + H(+). The catalysed reaction is L-aspartyl-tRNA(Asn) + L-glutamine + ATP + H2O = L-asparaginyl-tRNA(Asn) + L-glutamate + ADP + phosphate + 2 H(+). Its function is as follows. Allows the formation of correctly charged Asn-tRNA(Asn) or Gln-tRNA(Gln) through the transamidation of misacylated Asp-tRNA(Asn) or Glu-tRNA(Gln) in organisms which lack either or both of asparaginyl-tRNA or glutaminyl-tRNA synthetases. The reaction takes place in the presence of glutamine and ATP through an activated phospho-Asp-tRNA(Asn) or phospho-Glu-tRNA(Gln). In Bacillus thuringiensis subsp. konkukian (strain 97-27), this protein is Aspartyl/glutamyl-tRNA(Asn/Gln) amidotransferase subunit B.